A 659-amino-acid polypeptide reads, in one-letter code: UvrABC system protein B (659 aa).

The Helicase ATP-binding domain occupies 25–182; sequence QSIENGNRGQ…KKLIEIQYER (158 aa). 38-45 provides a ligand contact to ATP; sequence GVTGSGKT. The Beta-hairpin motif lies at 91 to 114; that stretch reads YYDYYQPEAYVPQTDTFIEKDASI. The 154-residue stretch at 429-582 folds into the Helicase C-terminal domain; sequence QIDDLYGEIQ…QMEYNEEHNI (154 aa). The region spanning 622–657 is the UVR domain; that stretch reads EKLIEQYEEEMKEAAKNLQFERAAELRDIIKDLKEN.

Belongs to the UvrB family. Forms a heterotetramer with UvrA during the search for lesions. Interacts with UvrC in an incision complex.

The protein resides in the cytoplasm. The UvrABC repair system catalyzes the recognition and processing of DNA lesions. A damage recognition complex composed of 2 UvrA and 2 UvrB subunits scans DNA for abnormalities. Upon binding of the UvrA(2)B(2) complex to a putative damaged site, the DNA wraps around one UvrB monomer. DNA wrap is dependent on ATP binding by UvrB and probably causes local melting of the DNA helix, facilitating insertion of UvrB beta-hairpin between the DNA strands. Then UvrB probes one DNA strand for the presence of a lesion. If a lesion is found the UvrA subunits dissociate and the UvrB-DNA preincision complex is formed. This complex is subsequently bound by UvrC and the second UvrB is released. If no lesion is found, the DNA wraps around the other UvrB subunit that will check the other stand for damage. The polypeptide is UvrABC system protein B (Clostridium perfringens (strain SM101 / Type A)).